The primary structure comprises 284 residues: Pantothenate synthetase (284 aa).

An ATP-binding site is contributed by 30–37 (MGNLHDGH). His-37 serves as the catalytic Proton donor. Gln-61 contributes to the (R)-pantoate binding site. Gln-61 lines the beta-alanine pocket. 149–152 (GEKD) contacts ATP. Gln-155 contacts (R)-pantoate. ATP is bound by residues Ile-178 and 186-189 (LSSR).

This sequence belongs to the pantothenate synthetase family. As to quaternary structure, homodimer.

It localises to the cytoplasm. The enzyme catalyses (R)-pantoate + beta-alanine + ATP = (R)-pantothenate + AMP + diphosphate + H(+). It participates in cofactor biosynthesis; (R)-pantothenate biosynthesis; (R)-pantothenate from (R)-pantoate and beta-alanine: step 1/1. Functionally, catalyzes the condensation of pantoate with beta-alanine in an ATP-dependent reaction via a pantoyl-adenylate intermediate. This Salmonella newport (strain SL254) protein is Pantothenate synthetase.